The primary structure comprises 330 residues: Lipoyl synthase (330 aa).

Cysteine 77, cysteine 82, cysteine 88, cysteine 103, cysteine 107, cysteine 110, and serine 317 together coordinate [4Fe-4S] cluster. The 218-residue stretch at 89-306 folds into the Radical SAM core domain; it reads FNHGTATFMI…RSEAERMGFE (218 aa).

Belongs to the radical SAM superfamily. Lipoyl synthase family. The cofactor is [4Fe-4S] cluster.

The protein resides in the cytoplasm. It carries out the reaction [[Fe-S] cluster scaffold protein carrying a second [4Fe-4S](2+) cluster] + N(6)-octanoyl-L-lysyl-[protein] + 2 oxidized [2Fe-2S]-[ferredoxin] + 2 S-adenosyl-L-methionine + 4 H(+) = [[Fe-S] cluster scaffold protein] + N(6)-[(R)-dihydrolipoyl]-L-lysyl-[protein] + 4 Fe(3+) + 2 hydrogen sulfide + 2 5'-deoxyadenosine + 2 L-methionine + 2 reduced [2Fe-2S]-[ferredoxin]. It functions in the pathway protein modification; protein lipoylation via endogenous pathway; protein N(6)-(lipoyl)lysine from octanoyl-[acyl-carrier-protein]: step 2/2. In terms of biological role, catalyzes the radical-mediated insertion of two sulfur atoms into the C-6 and C-8 positions of the octanoyl moiety bound to the lipoyl domains of lipoate-dependent enzymes, thereby converting the octanoylated domains into lipoylated derivatives. The polypeptide is Lipoyl synthase (Actinobacillus pleuropneumoniae serotype 5b (strain L20)).